Consider the following 79-residue polypeptide: Dolichol phosphate-mannose biosynthesis regulatory protein (79 aa).

The next 2 helical transmembrane spans lie at 8–28 (IGFV…TWVI) and 50–70 (IIIP…FLGL).

The protein belongs to the DPM2 family. Component of the dolichol-phosphate mannose (DPM) synthase complex composed of dpm1, dpm2 and dpm3.

It localises to the endoplasmic reticulum membrane. It functions in the pathway protein modification; protein glycosylation. Its function is as follows. Regulates the biosynthesis of dolichol phosphate-mannose. Regulatory subunit of the dolichol-phosphate mannose (DPM) synthase complex; essential for the ER localization and stable expression of dpm1. The sequence is that of Dolichol phosphate-mannose biosynthesis regulatory protein (dpm2-1) from Dictyostelium discoideum (Social amoeba).